The following is a 658-amino-acid chain: Glycogen debranching enzyme (658 aa).

The active-site Nucleophile is the Asp-336. Glu-371 serves as the catalytic Proton donor. The segment at 459-484 is disordered; it reads EANGEENRDGTNSNYSDNHGKEGLGG.

It belongs to the glycosyl hydrolase 13 family.

The enzyme catalyses Hydrolysis of (1-&gt;6)-alpha-D-glucosidic linkages to branches with degrees of polymerization of three or four glucose residues in limit dextrin.. The protein operates within glycan degradation; glycogen degradation. Its function is as follows. Removes maltotriose and maltotetraose chains that are attached by 1,6-alpha-linkage to the limit dextrin main chain, generating a debranched limit dextrin. The sequence is that of Glycogen debranching enzyme from Salmonella paratyphi A (strain ATCC 9150 / SARB42).